The chain runs to 119 residues: Large ribosomal subunit protein bL20c (119 aa).

It belongs to the bacterial ribosomal protein bL20 family.

The protein resides in the plastid. The protein localises to the chloroplast. Its function is as follows. Binds directly to 23S ribosomal RNA and is necessary for the in vitro assembly process of the 50S ribosomal subunit. It is not involved in the protein synthesizing functions of that subunit. The sequence is that of Large ribosomal subunit protein bL20c from Brachypodium distachyon (Purple false brome).